A 576-amino-acid polypeptide reads, in one-letter code: RING finger and SPRY domain-containing protein 1 (576 aa).

An N-terminal signal peptide occupies residues 1-16; it reads MIVFGWAVFLASRSLG. Serine 50 carries the phosphoserine modification. A disordered region spans residues 50 to 99; that stretch reads SGTDDSVDTQQQQAENSAVPTADTRSQPRDPVRPPRRGRGPHEPRRKKQN. Positions 57–68 are enriched in polar residues; sequence DTQQQQAENSAV. Positions 83 to 97 are enriched in basic residues; it reads PPRRGRGPHEPRRKK. Residues 300 to 483 form the B30.2/SPRY domain; sequence LFLKEGRQLT…CEFNFGAKPF (184 aa). The N-linked (GlcNAc...) asparagine glycan is linked to asparagine 314. The RING-type zinc-finger motif lies at 527–562; the sequence is CSLCCDEVADTQLKPCGHSDLCMDCALQLETCPLCR.

It localises to the secreted. This Pongo abelii (Sumatran orangutan) protein is RING finger and SPRY domain-containing protein 1 (RSPRY1).